The primary structure comprises 392 residues: Protein SRL2 (392 aa).

Ser-11 carries the phosphoserine modification. Positions 18–52 (KPSETPKMEEEKLEVTNVNASSSKKVHKSKKSTSK) are disordered. The segment covering 21–31 (ETPKMEEEKLE) has biased composition (basic and acidic residues). Residues 41-50 (KKVHKSKKST) show a composition bias toward basic residues. Ser-139 is subject to Phosphoserine. The disordered stretch occupies residues 284-303 (EDSTAVTNENGHISSEKNLK). The span at 287–296 (TAVTNENGHI) shows a compositional bias: polar residues.

Its subcellular location is the cytoplasm. The protein localises to the nucleus. The sequence is that of Protein SRL2 (SRL2) from Saccharomyces cerevisiae (strain ATCC 204508 / S288c) (Baker's yeast).